The chain runs to 935 residues: MNMKKKEKHAIRKKSIGVASVLVGTLIGFGLLSSKEADASENSVTQSDSASNESKSNDSSSVSAAPKTDDTNVSDTKTSSNTNNGETSVAQNPAQQETTQSSSTNATTEETPVTGEATTTTTNQANTPATTQSSNTNAEELVNQTSNETTSNDTNTVSSVNSPQNSTNAENVSTTQDTSTEATPSNNESAPQNTDASNKDVVSQAVNPSTPRMRAFSLAAVAADAPAAGTDITNQLTDVKVTIDSGTTVYPHQAGYVKLNYGFSVPNSAVKGDTFKITVPKELNLNGVTSTAKVPPIMAGDQVLANGVIDSDGNVIYTFTDYVDNKENVTANITMPAYIDPENVTKTGNVTLTTGIGTNTASKTVLIDYEKYGQFHNLSIKGTIDQIDKTNNTYRQTIYVNPSGDNVVLPALTGNLIPNTKSNALIDAKNTDIKVYRVDNANDLSESYYVNPSDFEDVTNQVRISFPNANQYKVEFPTDDDQITTPYIVVVNGHIDPASTGDLALRSTFYGYDSNFIWRSMSWDNEVAFNNGSGSGDGIDKPVVPEQPDEPGEIEPIPEDSDSDPGSDSGSDSNSDSGSDSGSDSTSDSGSDSASDSDSASDSDSASDSDSASDSDSASDSDSASDSDSASDSDSASDSDSASDSDSASDSDSASDSDSASDSDSASDSDSDSDSDSDSDSDSDSDSDSDSDSDSDSDSDSDSDSDSDSDSDSDSDSDSDSDSDSDSDSDSDSDSDSDSDSDSDSDSDSDSDSDSDSDSDSDSDSDSASDSDSDSDSESDSDSDSDSDSDSDSDSDSDSDSESDSDSDSDSDSESDSDSDSDSDSDSASDSDSGSDSDSSSDSDSDSTSDTGSDNDSDSDSNSDSESGSNNNVVPPNSPKNGTNASNKNEAKDSKEPLPDTGSEDEANTSLIWGLLASLGSLLLFRRKKENKDKK.

The N-terminal stretch at 1–39 (MNMKKKEKHAIRKKSIGVASVLVGTLIGFGLLSSKEADA) is a signal peptide. A YSIRK-G/S signaling motif motif is present at residues 9–20 (HAIRKKSIGVAS). Disordered regions lie at residues 34–205 (SKEA…VSQA) and 529–906 (FNNG…SEDE). The interval 40–542 (SENSVTQSDS…SGSGDGIDKP (503 aa)) is ligand binding A region. A compositionally biased stretch (low complexity) spans 47–65 (SDSASNESKSNDSSSVSAA). Over residues 71-105 (TNVSDTKTSSNTNNGETSVAQNPAQQETTQSSSTN) the composition is skewed to polar residues. Low complexity-rich tracts occupy residues 106–132 (ATTE…ATTQ) and 143–162 (NQTS…SVNS). A compositionally biased stretch (polar residues) spans 163–205 (PQNSTNAENVSTTQDTSTEATPSNNESAPQNTDASNKDVVSQA). Residues 547 to 565 (QPDEPGEIEPIPEDSDSDP) are compositionally biased toward acidic residues. Positions 566-598 (GSDSGSDSNSDSGSDSGSDSTSDSGSDSASDSD) are enriched in low complexity. Over residues 599 to 863 (SASDSDSASD…DNDSDSDSNS (265 aa)) the composition is skewed to acidic residues. The segment covering 864 to 882 (DSESGSNNNVVPPNSPKNG) has biased composition (low complexity). Basic and acidic residues predominate over residues 889-898 (NEAKDSKEPL). The LPXTG sorting signal motif lies at 898–902 (LPDTG). Thr901 is subject to Pentaglycyl murein peptidoglycan amidated threonine. Residues 902-935 (GSEDEANTSLIWGLLASLGSLLLFRRKKENKDKK) constitute a propeptide, removed by sortase.

The protein belongs to the serine-aspartate repeat-containing protein (SDr) family.

It localises to the secreted. It is found in the cell wall. In terms of biological role, cell surface-associated protein implicated in virulence. Promotes bacterial attachment exclusively to the gamma-chain of human fibrinogen. Induces formation of bacterial clumps. The protein is Clumping factor A (clfA) of Staphylococcus aureus (strain Mu50 / ATCC 700699).